The primary structure comprises 663 residues: Glutamate-rich protein 6 (663 aa).

Disordered regions lie at residues 1-74 and 106-136; these read MAHL…ETFS and LTST…HKSF. Acidic residues predominate over residues 20–69; that stretch reads ESEEELEEEEEEEEVEEEEEEVEEEEEEVEEEEEEVVEEELVGEEQELEA. Low complexity predominate over residues 112–132; sequence PSQSATSTETPSASPPSSTSS.

The protein belongs to the ERICH6 family.

It is found in the nucleus. The protein is Glutamate-rich protein 6 (ERICH6) of Homo sapiens (Human).